The primary structure comprises 159 residues: uncharacterized protein (159 aa).

Residues 1 to 13 show a composition bias toward basic and acidic residues; that stretch reads MESRPSGRQHASE. Residues 1–35 form a disordered region; the sequence is MESRPSGRQHASEGDGDQSPTQCAGMRSSGRSDQP.

This is an uncharacterized protein from Homo sapiens (Human).